A 1164-amino-acid chain; its full sequence is DNA-directed RNA polymerase 132 kDa polypeptide (1164 aa).

Belongs to the RNA polymerase beta chain family. As to quaternary structure, the DNA-dependent RNA polymerase used for intermediate and late genes expression consists of eight subunits (147) kDa, (133) kDa, (35) kDa, (30) kDa, (22) kDa, (19) kDa, (18) kDa and (7) kDa totalling more than 500 kDa in mass. The same holoenzyme, with the addition of the transcription-specificity factor RAP94, is used for early gene expression.

Its subcellular location is the virion. The catalysed reaction is RNA(n) + a ribonucleoside 5'-triphosphate = RNA(n+1) + diphosphate. Its function is as follows. Part of the DNA-dependent RNA polymerase which catalyzes the transcription of viral DNA into RNA using the four ribonucleoside triphosphates as substrates. Responsible for the transcription of early, intermediate and late genes. DNA-dependent RNA polymerase associates with the early transcription factor (ETF), itself composed of D6 and A7, thereby allowing the early genes transcription. Late transcription, and probably also intermediate transcription, require newly synthesized RNA polymerase. The chain is DNA-directed RNA polymerase 132 kDa polypeptide (RPO132) from Mus musculus (Mouse).